The primary structure comprises 666 residues: MSSPFVPIITADIDWRDDLPYSLQFDDIYYSAEGGINQSLYVFVEGNNLINRWQQLPTNESNVFTIAETGFGTGMNFLLTWKLWEKFAPQNARLHYISCDKHPLKKDDLIKCLQKWPELSVQTEKLIEHYPVLTPGYHHLAFSNNRITLTLMLGDVLECYEQLLFCGDINLEHQLRESYVNAWYLDGFSPSKNQSMWSDNLFTVIAMLSKESTTVATYSASSIVKTALTNAGFVINKRKGFGPKRHMICAHYEKAYSSSKKNRHTPWHINYPVTKEERTALIVGGGLAGCFIANSLAKRGWEVTILEEKEKVGCGGSANQQAVLFPKLSIYKSPFTQFMLYSFLYANDVYKELLKHYNLGELKGSLLLAHNEREKANQQSLIHWLELYPELGQLVDEKQSSELSGISLPCGGLFIPSSGWINSPELCDILIDNKRISLITGNRVQSINYNQKNWVVNDIDASVLILANGQQVNYFHETNHLPVKAIRGQMTTIQSTQESTKLKIPLCAEGHVLPALNNSHRVGASYDIGTSEPELNALDDQLNLDRLKRIAPDIIWSQNVLDHWAGIRAASPDYLPIVGPLPNALEFKEIYSELKSNSKRWIAEAAPCYPNLYVCAAFGSRGLTTIPLATEWLAGLINREISILPRKLIQAISPARFLRKKIIQGP.

The interval 1-253 (MSSPFVPIIT…KRHMICAHYE (253 aa)) is tRNA (mnm(5)s(2)U34)-methyltransferase. An FAD-dependent cmnm(5)s(2)U34 oxidoreductase region spans residues 283-666 (VGGGLAGCFI…FLRKKIIQGP (384 aa)).

It in the N-terminal section; belongs to the methyltransferase superfamily. tRNA (mnm(5)s(2)U34)-methyltransferase family. The protein in the C-terminal section; belongs to the DAO family. The cofactor is FAD.

Its subcellular location is the cytoplasm. The catalysed reaction is 5-aminomethyl-2-thiouridine(34) in tRNA + S-adenosyl-L-methionine = 5-methylaminomethyl-2-thiouridine(34) in tRNA + S-adenosyl-L-homocysteine + H(+). Its function is as follows. Catalyzes the last two steps in the biosynthesis of 5-methylaminomethyl-2-thiouridine (mnm(5)s(2)U) at the wobble position (U34) in tRNA. Catalyzes the FAD-dependent demodification of cmnm(5)s(2)U34 to nm(5)s(2)U34, followed by the transfer of a methyl group from S-adenosyl-L-methionine to nm(5)s(2)U34, to form mnm(5)s(2)U34. The polypeptide is tRNA 5-methylaminomethyl-2-thiouridine biosynthesis bifunctional protein MnmC (Legionella pneumophila (strain Lens)).